We begin with the raw amino-acid sequence, 29 residues long: NADH dehydrogenase [ubiquinone] 1 beta subcomplex subunit 10 (29 aa).

Positions 1 to 29 are disordered; that stretch reads GRKKGVQFDEGAPDDFDPNNPYKKDVAFL.

The protein belongs to the complex I NDUFB10 subunit family. As to quaternary structure, complex I is composed of about 45 different subunits.

Its subcellular location is the mitochondrion inner membrane. Functionally, accessory subunit of the mitochondrial membrane respiratory chain NADH dehydrogenase (Complex I), that is believed not to be involved in catalysis. Complex I functions in the transfer of electrons from NADH to the respiratory chain. The immediate electron acceptor for the enzyme is believed to be ubiquinone. In Solanum tuberosum (Potato), this protein is NADH dehydrogenase [ubiquinone] 1 beta subcomplex subunit 10.